The primary structure comprises 328 residues: NADH-cytochrome b5 reductase-like protein (328 aa).

The FAD-binding FR-type domain maps to 76–184 (DKWLEFKLQD…KGPVEKFKYS (109 aa)). Thr-201 bears the Phosphothreonine mark.

The protein belongs to the flavoprotein pyridine nucleotide cytochrome reductase family. Requires FAD as cofactor.

The protein resides in the mitochondrion. It catalyses the reaction 2 Fe(III)-[cytochrome b5] + NADH = 2 Fe(II)-[cytochrome b5] + NAD(+) + H(+). In terms of biological role, desaturation and elongation of fatty acids. The protein is NADH-cytochrome b5 reductase-like protein (CBR2) of Arabidopsis thaliana (Mouse-ear cress).